The following is a 219-amino-acid chain: Formate dehydrogenase 2 subunit beta (cytochrome c-553) (219 aa).

Residues 3 to 32 (KAFLIDTTRCTACRGCQLACKEWHDLPANV) form the 4Fe-4S ferredoxin-type 1 domain. 12 residues coordinate [4Fe-4S] cluster: Cys12, Cys15, Cys18, Cys22, Cys74, Cys77, Cys82, Cys124, Cys141, Cys144, Cys156, and Cys160. The 40-residue stretch at 132–171 (DPKTKRITKCDMCFDRVSAGMQPICVKTCPTGTMAFGERD) folds into the 4Fe-4S ferredoxin-type 2 domain.

As to quaternary structure, heterotrimer of cytochrome c3 FDH2C and formate dehydrogenase FDH2 alpha and beta subunits that forms the FdhABC(3) complex. [4Fe-4S] cluster is required as a cofactor.

It is found in the periplasm. In terms of biological role, beta chain of the formate dehydrogenase (FDH) that catalyzes the reversible two-electron oxidation of formate to carbon dioxide. The beta chain is an electron transfer unit. The protein is Formate dehydrogenase 2 subunit beta (cytochrome c-553) of Nitratidesulfovibrio vulgaris (strain ATCC 29579 / DSM 644 / CCUG 34227 / NCIMB 8303 / VKM B-1760 / Hildenborough) (Desulfovibrio vulgaris).